A 429-amino-acid chain; its full sequence is MKERTIQPVNNGLNGNITIPGDKSISHRAVMFGAIAEGTTTIKGFLPGADCLSTISCFKEMGVDIVQDGDEVTVVGKGLEGLQEPKAVLDVGNSGTTIRLMSGILANTPFFSCVQGDASIAKRPMKRVTNPLKQMGANIDGREEGTFTPLTVRGGDLKAIEYTSPVASAQVKSAILLAGLRAEGVTAVTEPHISRDHTERMLEAFGVKVTREGKTVKLAGGQKLTATDVQVPGDVSSAAFFLVAGAIIPNSKLVLENVGMNPTRTGIIDVLEKMGATFTVEPINEGASEPAANITIETSSLKGIEIGGDIIPRLIDEIPVIALAATQAEGITVIKDAHELKVKETNRIDTVVAELTKLGARIEATDDGMIIYGKSALKGNTVNSYGDHRIGMMLAIAGCIAEGKTIIEDAEAVGVSYPTFFEELQKLAK.

The 3-phosphoshikimate site is built by K23, S24, and R28. K23 contributes to the phosphoenolpyruvate binding site. Phosphoenolpyruvate is bound by residues G95 and R123. 3-phosphoshikimate-binding residues include S168, Q170, D316, and K343. Position 170 (Q170) interacts with phosphoenolpyruvate. D316 (proton acceptor) is an active-site residue. Positions 347 and 389 each coordinate phosphoenolpyruvate.

Belongs to the EPSP synthase family. Monomer.

The protein resides in the cytoplasm. It carries out the reaction 3-phosphoshikimate + phosphoenolpyruvate = 5-O-(1-carboxyvinyl)-3-phosphoshikimate + phosphate. It functions in the pathway metabolic intermediate biosynthesis; chorismate biosynthesis; chorismate from D-erythrose 4-phosphate and phosphoenolpyruvate: step 6/7. Its function is as follows. Catalyzes the transfer of the enolpyruvyl moiety of phosphoenolpyruvate (PEP) to the 5-hydroxyl of shikimate-3-phosphate (S3P) to produce enolpyruvyl shikimate-3-phosphate and inorganic phosphate. The chain is 3-phosphoshikimate 1-carboxyvinyltransferase from Bacillus thuringiensis subsp. konkukian (strain 97-27).